The sequence spans 920 residues: Protein O-mannosyl-transferase TMTC3 (920 aa).

Residues 1–14 (MLEGKMADINFKEV) lie on the Cytoplasmic side of the membrane. A helical membrane pass occupies residues 15-35 (TLIVSVVAACYWNSLFCGFVF). The Extracellular segment spans residues 36–94 (DDVSAILDNKDLHPSTPLKTLFQNDFWGTPMSEERSHKSYRPLTVLTFRLNYLLSELKP). The chain crosses the membrane as a helical span at residues 95 to 115 (MSYHLLNTVFHAVVSVIFLKV). At 116–125 (CRLFLDKRSS) the chain is on the cytoplasmic side. 2 helical membrane-spanning segments follow: residues 126 to 144 (MIAA…AVTG) and 145 to 163 (VVGR…AFLS). At 164-171 (YTKSKGPD) the chain is on the cytoplasmic side. The chain crosses the membrane as a helical span at residues 172–192 (NSIVWTPIVLTVFLVAVATLC). Over 193-198 (KEQGIT) the chain is Extracellular. Residues 199–219 (VVGICCVYEVFVAQGYTLPML) form a helical membrane-spanning segment. Residues 220-236 (CTVAGQFLRGKGSIPLS) are Cytoplasmic-facing. The helical transmembrane segment at 237–257 (MLQTLVKLIVLMLSTLLLVVV) threads the bilayer. Residues 258–325 (RVQVIQSQLP…LIESFLDVRN (68 aa)) lie on the Extracellular side of the membrane. A helical transmembrane segment spans residues 326 to 346 (LATFAFFCFLGALGIFSLRYP). The Cytoplasmic portion of the chain corresponds to 347 to 358 (GDSSKTVLMALC). Residues 359–379 (LMALPFIPASNLFFPVGFVVA) form a helical membrane-spanning segment. Over 380–381 (ER) the chain is Extracellular. The chain crosses the membrane as a helical span at residues 382-402 (VLYVPSMGFCILVAHGWQKIS). Residues 403 to 409 (NKSVLKK) lie on the Cytoplasmic side of the membrane. The chain crosses the membrane as a helical span at residues 410 to 428 (LSWVCLSMVILTHALKTLH). Topologically, residues 429 to 920 (RNWDWESEYT…EEIERILNGE (492 aa)) are extracellular. 9 TPR repeats span residues 451-484 (AKLW…QPDD), 485-518 (IGAH…MPQI), 534-567 (NVYI…RPDF), 568-601 (KQAY…DRNN), 602-635 (ADLW…NPKH), 673-706 (ANGY…QPDF), 707-740 (RSAL…YPDH), 742-775 (KGLI…DPSN), and 776-809 (VQGK…APHE). A glycan (N-linked (GlcNAc...) asparagine) is linked at N499. Y508 is subject to Phosphotyrosine. An N-linked (GlcNAc...) asparagine glycan is attached at N546. Positions 829–897 (VEQPLAPADK…APHKTTKDIK (69 aa)) are disordered. Residues 840 to 858 (PGTEEREEIPSEDVKEISS) are compositionally biased toward basic and acidic residues. The span at 867 to 880 (KTNNNRNSKSNKQS) shows a compositional bias: low complexity. Over residues 887–897 (DAPHKTTKDIK) the composition is skewed to basic and acidic residues.

This sequence belongs to the TMTC family.

The protein localises to the membrane. Its subcellular location is the endoplasmic reticulum. The enzyme catalyses a di-trans,poly-cis-dolichyl beta-D-mannosyl phosphate + L-seryl-[protein] = 3-O-(alpha-D-mannosyl)-L-seryl-[protein] + a di-trans,poly-cis-dolichyl phosphate + H(+). It carries out the reaction a di-trans,poly-cis-dolichyl beta-D-mannosyl phosphate + L-threonyl-[protein] = 3-O-(alpha-D-mannosyl)-L-threonyl-[protein] + a di-trans,poly-cis-dolichyl phosphate + H(+). It functions in the pathway protein modification; protein glycosylation. Transfers mannosyl residues to the hydroxyl group of serine or threonine residues. The 4 members of the TMTC family are O-mannosyl-transferases dedicated primarily to the cadherin superfamily, each member seems to have a distinct role in decorating the cadherin domains with O-linked mannose glycans at specific regions. Also acts as O-mannosyl-transferase on other proteins such as PDIA3. Involved in the positive regulation of proteasomal protein degradation in the endoplasmic reticulum (ER), and the control of ER stress response. This is Protein O-mannosyl-transferase TMTC3 from Mus musculus (Mouse).